The chain runs to 215 residues: Cytochrome b6 (215 aa).

A helical transmembrane segment spans residues I32–F52. C35 contacts heme c. Heme b is bound by residues H86 and H100. The next 3 membrane-spanning stretches (helical) occupy residues A90–F110, L116–Y136, and L186–I206. H187 and H202 together coordinate heme b.

Belongs to the cytochrome b family. PetB subfamily. In terms of assembly, the 4 large subunits of the cytochrome b6-f complex are cytochrome b6, subunit IV (17 kDa polypeptide, PetD), cytochrome f and the Rieske protein, while the 4 small subunits are PetG, PetL, PetM and PetN. The complex functions as a dimer. The cofactor is heme b. It depends on heme c as a cofactor.

It localises to the plastid. It is found in the chloroplast thylakoid membrane. In terms of biological role, component of the cytochrome b6-f complex, which mediates electron transfer between photosystem II (PSII) and photosystem I (PSI), cyclic electron flow around PSI, and state transitions. The protein is Cytochrome b6 of Helianthus annuus (Common sunflower).